The sequence spans 576 residues: K(+)/H(+) antiporter NhaP2 (576 aa).

A run of 13 helical transmembrane segments spans residues 6–26 (INSF…LSPM), 34–54 (ILLI…GGIL), 58–78 (YSTA…DGGM), 87–107 (VALW…TSIT), 109–129 (MMAA…GAIV), 163–183 (PMAV…DTEM), 185–205 (FSFM…LGLG), 219–239 (LADG…YAAS), 242–262 (LGGS…NKPT), 271–291 (VLDG…GLLL), 299–319 (ILIP…PVAV), 335–355 (WFIS…VFPM), and 359–379 (LPGA…SLLV). In terms of domain architecture, RCK C-terminal spans 405-486 (SGVEIYPSSE…LEALSNLFSQ (82 aa)).

This sequence belongs to the monovalent cation:proton antiporter 1 (CPA1) transporter (TC 2.A.36) family. NhaP2 subfamily.

The protein localises to the cell inner membrane. It carries out the reaction K(+)(in) + H(+)(out) = K(+)(out) + H(+)(in). Functionally, k(+)/H(+) antiporter that extrudes potassium in exchange for external protons and maintains the internal concentration of potassium under toxic levels. This Shewanella baltica (strain OS155 / ATCC BAA-1091) protein is K(+)/H(+) antiporter NhaP2.